Consider the following 953-residue polypeptide: Atromentin synthetase invA5 (953 aa).

The segment at 37–460 is adenylation (A) domain; the sequence is SRAVSQYPDH…SGRIKDTVIV (424 aa). The 79-residue stretch at 592 to 670 folds into the Carrier domain; sequence APSTETEKTL…SLAKYVDSLI (79 aa). Residues 597–667 form a thiolation and peptide carrier (T) domain region; sequence TEKTLAGIYA…VISSLAKYVD (71 aa). Ser629 is modified (O-(pantetheine 4'-phosphoryl)serine). The interval 693–795 is thioesterase (TE) domain; that stretch reads PIFMVHPGVG…FTGLINIPPN (103 aa).

This sequence belongs to the ATP-dependent AMP-binding enzyme family.

It participates in secondary metabolite biosynthesis. Functionally, an L-tyrosine:2-oxoglutarate aminotransferase (probably invD) and atromentin synthetase invA5 catalyze consecutive steps to turn over L-tyrosine into atromentin, which represents the generic precursor molecule for the entire terphenylquinone and pulvinic acid family of pigments, which are widely distributed secondary metabolites in homobasidiomycetes. The first step catalyzed by the aminotransferase converts L-tyrosine in to 4-hydroxyphenylpyruvate (4-HPP). Adenylation of two 4-HPP monomers by the invA5 adenylation (A) domain, covalent tethering of the monomers as a thioester and oxoester onto the invA5 thiolation (T) and thioesterase (TE) domains, respectively, and symmetric C-C-bond formation between two monomers catalyzed by the invA5 TE domain leads to atromentin. This Paxillus involutus (Naked brimcap) protein is Atromentin synthetase invA5 (invA5).